We begin with the raw amino-acid sequence, 1701 residues long: Rho guanine nucleotide exchange factor TIAM2 (1701 aa).

Disordered regions lie at residues 1–21 (MGNS…NTIT), 201–250 (SPTL…SSWY), 265–293 (GSFL…FNQS), and 389–417 (SLSR…DGLN). G2 carries N-myristoyl glycine lipidation. The span at 238–248 (SKGSSLSSESS) shows a compositional bias: low complexity. A compositionally biased stretch (basic and acidic residues) spans 397 to 413 (LQEPRSKEGSDYFDSRS). Positions 506–620 (VVRKAGWLFF…WVTAVHSACA (115 aa)) constitute a PH 1 domain. Positions 628–695 (GKEDTLRLLK…KFHMDLFRMR (68 aa)) form a coiled coil. One can recognise an RBD domain in the interval 810–881 (IQTYVHFQDN…YMQQQVYDEI (72 aa)). Residues 890-976 (DVQLTKTGSV…GLTLIARPPD (87 aa)) enclose the PDZ domain. Residues 1070–1092 (DSQANGMEGPRENQDPPPRSLAR) form a disordered region. Residues 1099–1293 (RLRKVIQELV…EKVASHINEM (195 aa)) enclose the DH domain. The PH 2 domain occupies 1347 to 1478 (DLELTVFVFK…EKTCKDRLVP (132 aa)). 2 disordered regions span residues 1500-1556 (NSSS…GLAD) and 1568-1628 (LSDE…PKLV). Over residues 1513-1527 (GTLLDSDEGSLSSGT) the composition is skewed to low complexity. Phosphoserine is present on S1583. Residues 1596–1607 (RISEDPDVHPEA) show a composition bias toward basic and acidic residues. At T1648 the chain carries Phosphothreonine.

This sequence belongs to the TIAM family. As to quaternary structure, interacts with MAP1A, MAP1B, PARP1 and YWHAE. Interacts with CD44, PARD3 and MAPK8IP2. Phosphorylated on serine and threonine residues. Phosphorylated on Thr-1648 by Rho-kinase. Its phosphorylation by Rho-kinase inhibits its guanine nucleotide exchange activity, its interaction with MAP1A, MAP1B, PARP1 and YWHAE and reduces its ability to promote neurite growth. In terms of tissue distribution, expressed in the occipital, frontal and temporal lobes, cerebellum, putamen and testis.

It is found in the cytoplasm. It localises to the cell projection. Its subcellular location is the lamellipodium. The protein resides in the filopodium. The protein localises to the growth cone. It is found in the neuron projection. It localises to the perikaryon. Modulates the activity of RHO-like proteins and connects extracellular signals to cytoskeletal activities. Acts as a GDP-dissociation stimulator protein that stimulates the GDP-GTP exchange activity of RHO-like GTPases and activates them. Mediates extracellular laminin signals to activate Rac1, contributing to neurite growth. Involved in lamellipodial formation and advancement of the growth cone of embryonic hippocampal neurons. Promotes migration of neurons in the cerebral cortex. When overexpressed, induces membrane ruffling accompanied by the accumulation of actin filaments along the altered plasma membrane. Activates specifically RAC1, but not CDC42 and RHOA. This is Rho guanine nucleotide exchange factor TIAM2 (TIAM2) from Homo sapiens (Human).